A 130-amino-acid chain; its full sequence is Large ribosomal subunit protein bL20 (130 aa).

Belongs to the bacterial ribosomal protein bL20 family.

Its function is as follows. Binds directly to 23S ribosomal RNA and is necessary for the in vitro assembly process of the 50S ribosomal subunit. It is not involved in the protein synthesizing functions of that subunit. The chain is Large ribosomal subunit protein bL20 from Clavibacter michiganensis subsp. michiganensis (strain NCPPB 382).